We begin with the raw amino-acid sequence, 362 residues long: Type-1 angiotensin II receptor A (362 aa).

The Extracellular segment spans residues 1-26 (MSNASTVETSDVERIAVNCSKSGMHN). Asparagine 3 and asparagine 18 each carry an N-linked (GlcNAc...) asparagine glycan. 2 disulfides stabilise this stretch: cysteine 19–cysteine 273 and cysteine 102–cysteine 181. A helical membrane pass occupies residues 27-56 (YIFIAIPIIYSTIFVVGVFGNSMVVIVIYS). Residues 57–62 (YMKMKT) are Cytoplasmic-facing. A helical membrane pass occupies residues 63–90 (VASIFLMNLALSDLCFVITLPLWAAYTA). Residues 91–99 (MHYHWPFGN) lie on the Extracellular side of the membrane. The helical transmembrane segment at 100-126 (FLCKVASTAITLNLYTTVFLLTCLSID) threads the bilayer. The Cytoplasmic segment spans residues 127-142 (RYSAIVHPMKSRIWRT). The chain crosses the membrane as a helical span at residues 143–166 (AMVARLTCVGIWLVAFLASMPSII). The Extracellular portion of the chain corresponds to 167–191 (YRQIYLFHDTNQTVCAIVYDSGHIY). Arginine 168 provides a ligand contact to angiotensin II. Asparagine 177 is a glycosylation site (N-linked (GlcNAc...) asparagine). Tyrosine 185 and lysine 200 together coordinate angiotensin II. A helical membrane pass occupies residues 192 to 217 (FMVGMSLAKNIVGFLIPFLIILTSYT). Residues 218 to 238 (LIGKTLKEVYRAQRARNDDIF) are Cytoplasmic-facing. The chain crosses the membrane as a helical span at residues 239-267 (KMIVAVVLLFFFCWIPYQVFTFLDVLIQM). Topologically, residues 268–277 (DVIQNCKMYD) are extracellular. A helical membrane pass occupies residues 278–303 (IVDTGMPITICIAYFNSCLNPFLYGF). Residues 304–362 (FGKNFRKHFLQLIKYIPPKMRTHASVNTKSSLVSSSLSDTKRASKKIALQMTDNEEHCK) lie on the Cytoplasmic side of the membrane. A lipid anchor (S-palmitoyl cysteine) is attached at cysteine 361.

The protein belongs to the G-protein coupled receptor 1 family. In terms of processing, C-terminal Ser or Thr residues may be phosphorylated. In terms of tissue distribution, expressed in lung, liver, kidney, and spleen, with highest expression in the heart.

The protein localises to the cell membrane. Its function is as follows. Receptor for angiotensin II, a vasoconstricting peptide, which acts as a key regulator of blood pressure and sodium retention by the kidney. The activated receptor in turn couples to G-alpha proteins G(q) (GNAQ, GNA11, GNA14 or GNA15) and thus activates phospholipase C and increases the cytosolic Ca(2+) concentrations, which in turn triggers cellular responses such as stimulation of protein kinase C. The sequence is that of Type-1 angiotensin II receptor A (agtr1-a) from Xenopus laevis (African clawed frog).